The sequence spans 249 residues: Phosphonates import ATP-binding protein PhnC (249 aa).

Positions 2–246 constitute an ABC transporter domain; that stretch reads IEFKKVEKVW…KLNESKLEEI (245 aa). Residue 35–42 participates in ATP binding; sequence GLSGAGKT.

The protein belongs to the ABC transporter superfamily. Phosphonates importer (TC 3.A.1.9.1) family. In terms of assembly, the complex is composed of two ATP-binding proteins (PhnC), two transmembrane proteins (PhnE) and a solute-binding protein (PhnD).

It localises to the cell membrane. The catalysed reaction is phosphonate(out) + ATP + H2O = phosphonate(in) + ADP + phosphate + H(+). In terms of biological role, part of the ABC transporter complex PhnCDE involved in phosphonates import. Responsible for energy coupling to the transport system. This chain is Phosphonates import ATP-binding protein PhnC, found in Mesoplasma florum (strain ATCC 33453 / NBRC 100688 / NCTC 11704 / L1) (Acholeplasma florum).